The primary structure comprises 374 residues: Spore germination protein B3 (374 aa).

A signal peptide spans 1–19 (MKTASKFSVMFFMLLALCG). A lipid anchor (N-palmitoyl cysteine) is attached at cysteine 20. Residue cysteine 20 is the site of S-diacylglycerol cysteine attachment.

Belongs to the GerABKC lipoprotein family.

The protein resides in the cell membrane. In terms of biological role, involved in the response to the germinative mixture of L-asparagine, glucose, fructose and potassium ions (AGFK). Cannot stimulate germination in the absence of gerD and gerK gene products (fructose and glucose receptors respectively). In Bacillus subtilis (strain 168), this protein is Spore germination protein B3 (gerBC).